Consider the following 241-residue polypeptide: Uridylate kinase (241 aa).

An ATP-binding site is contributed by 14-17 (KASG). Residues 22-27 (GDQGFG) are involved in allosteric activation by GTP. Position 56 (Gly56) interacts with UMP. ATP is bound by residues Gly57 and Arg61. Residues Asp76 and 137–144 (TGNPFFTT) contribute to the UMP site. ATP contacts are provided by Thr164, Gln165, Tyr170, and Asp173.

It belongs to the UMP kinase family. In terms of assembly, homohexamer.

It is found in the cytoplasm. The catalysed reaction is UMP + ATP = UDP + ADP. It functions in the pathway pyrimidine metabolism; CTP biosynthesis via de novo pathway; UDP from UMP (UMPK route): step 1/1. Its activity is regulated as follows. Allosterically activated by GTP. Inhibited by UTP. Functionally, catalyzes the reversible phosphorylation of UMP to UDP. The polypeptide is Uridylate kinase (Agrobacterium fabrum (strain C58 / ATCC 33970) (Agrobacterium tumefaciens (strain C58))).